A 26-amino-acid chain; its full sequence is Fumarylacetoacetate hydrolase domain-containing protein 2A (26 aa).

Belongs to the FAH family. It depends on Ca(2+) as a cofactor. The cofactor is Mg(2+).

May have hydrolase activity. This Mesocricetus auratus (Golden hamster) protein is Fumarylacetoacetate hydrolase domain-containing protein 2A.